We begin with the raw amino-acid sequence, 511 residues long: Maturase K (511 aa).

This sequence belongs to the intron maturase 2 family. MatK subfamily.

The protein resides in the plastid. It localises to the chloroplast. Its function is as follows. Usually encoded in the trnK tRNA gene intron. Probably assists in splicing its own and other chloroplast group II introns. In Hordeum secalinum (Meadow barley), this protein is Maturase K.